The chain runs to 413 residues: 2,3-bisphosphoglycerate-independent phosphoglycerate mutase (413 aa).

The protein belongs to the BPG-independent phosphoglycerate mutase family. A-PGAM subfamily.

It catalyses the reaction (2R)-2-phosphoglycerate = (2R)-3-phosphoglycerate. It functions in the pathway carbohydrate degradation; glycolysis; pyruvate from D-glyceraldehyde 3-phosphate: step 3/5. Functionally, catalyzes the interconversion of 2-phosphoglycerate and 3-phosphoglycerate. The chain is 2,3-bisphosphoglycerate-independent phosphoglycerate mutase from Sulfolobus acidocaldarius (strain ATCC 33909 / DSM 639 / JCM 8929 / NBRC 15157 / NCIMB 11770).